The primary structure comprises 68 residues: Small ribosomal subunit protein bS18c (68 aa).

It belongs to the bacterial ribosomal protein bS18 family. As to quaternary structure, part of the 30S ribosomal subunit.

It localises to the plastid. It is found in the chloroplast. This is Small ribosomal subunit protein bS18c (rps18) from Cyanidium caldarium (Red alga).